Reading from the N-terminus, the 534-residue chain is Unguisins hydrolase ungD' (534 aa).

The protein belongs to the peptidase S12 family.

The protein operates within secondary metabolite biosynthesis. Functionally, hydrolase; part of the gene cluster that mediates the biosynthesis of the unguisins, gamma-aminobutyric acid (GABA)-containing fungal cyclic heptapeptides with the amino acid sequence cyclo-(D-Ala1-D-Val2-L-Leu3-beta-MePhe4-D-Ala5-D-Trp6-GABA7) for unguisin H and cyclo-(D-Ala1-D-Ala2-L-Leu3-beta-MePhe4-D-Ala5-D-Trp6-GABA7) for unguisin I. Within the pathway, the hydrolase ungD' catalyzes the hydrolysis between the D-tryptophan and GABA residues of unguisins H and I to produce the corresponding linear peptides. The alanine racemase ungC' catalyzes the interconversion of L-alanine and D-alanine, providing the D-alanine which is accepted by the first adenylation domain of the nonribosomal peptide synthetase (NRPS) ungA', whereas the methyltransferase ungE' provides the (2R,3R)-beta-methylphenylalanine residue incorporated by the module 4. UngA' is the main enzyme within the cluster which condenses the 7 residues using its respective 7 modules. The terminal condensation domain (Ct) is involved in cyclization with D-alanine and thereby releasing of unguisins H and I. The protein is Unguisins hydrolase ungD' of Aspergillus campestris (strain IBT 28561).